Here is a 106-residue protein sequence, read N- to C-terminus: MTEFKRIPPEQAQALREQGAVLVDVRDAQTFQSNHIPDSVHLDNHSIADFIAKADLDKPLVVVCYHGNSSQSAAAYLVGQGFSDVYSVDGGFELWRATYPDETVQG.

A Rhodanese domain is found at 16–104 (REQGAVLVDV…WRATYPDETV (89 aa)). Residue Cys64 is the Cysteine persulfide intermediate of the active site.

Belongs to the GlpE family.

Its subcellular location is the cytoplasm. It carries out the reaction thiosulfate + hydrogen cyanide = thiocyanate + sulfite + 2 H(+). The catalysed reaction is thiosulfate + [thioredoxin]-dithiol = [thioredoxin]-disulfide + hydrogen sulfide + sulfite + 2 H(+). Functionally, transferase that catalyzes the transfer of sulfur from thiosulfate to thiophilic acceptors such as cyanide or dithiols. May function in a CysM-independent thiosulfate assimilation pathway by catalyzing the conversion of thiosulfate to sulfite, which can then be used for L-cysteine biosynthesis. This chain is Thiosulfate sulfurtransferase GlpE, found in Pseudomonas savastanoi pv. phaseolicola (strain 1448A / Race 6) (Pseudomonas syringae pv. phaseolicola (strain 1448A / Race 6)).